The following is a 462-amino-acid chain: Exodeoxyribonuclease 7 large subunit (462 aa).

The protein belongs to the XseA family. Heterooligomer composed of large and small subunits.

Its subcellular location is the cytoplasm. It catalyses the reaction Exonucleolytic cleavage in either 5'- to 3'- or 3'- to 5'-direction to yield nucleoside 5'-phosphates.. In terms of biological role, bidirectionally degrades single-stranded DNA into large acid-insoluble oligonucleotides, which are then degraded further into small acid-soluble oligonucleotides. This chain is Exodeoxyribonuclease 7 large subunit, found in Pectobacterium carotovorum subsp. carotovorum (strain PC1).